A 694-amino-acid polypeptide reads, in one-letter code: Elongation factor G (694 aa).

A tr-type G domain is found at 10–285; that stretch reads EKTRNIGIMA…GVVDYLPSPL (276 aa). Residues 19 to 26, 83 to 87, and 137 to 140 contribute to the GTP site; these read AHIDAGKT, DTPGH, and NKMD.

The protein belongs to the TRAFAC class translation factor GTPase superfamily. Classic translation factor GTPase family. EF-G/EF-2 subfamily.

The protein localises to the cytoplasm. Catalyzes the GTP-dependent ribosomal translocation step during translation elongation. During this step, the ribosome changes from the pre-translocational (PRE) to the post-translocational (POST) state as the newly formed A-site-bound peptidyl-tRNA and P-site-bound deacylated tRNA move to the P and E sites, respectively. Catalyzes the coordinated movement of the two tRNA molecules, the mRNA and conformational changes in the ribosome. The polypeptide is Elongation factor G (Lactobacillus delbrueckii subsp. bulgaricus (strain ATCC 11842 / DSM 20081 / BCRC 10696 / JCM 1002 / NBRC 13953 / NCIMB 11778 / NCTC 12712 / WDCM 00102 / Lb 14)).